A 237-amino-acid chain; its full sequence is Lectin alpha chain (237 aa).

2 residues coordinate Mn(2+): E8 and D10. The Ca(2+) site is built by D10, Y12, N14, and D19. Y12 and N14 together coordinate a carbohydrate. The Mn(2+) site is built by D19 and H24. Position 99–100 (99–100) interacts with a carbohydrate; sequence LY. D208 provides a ligand contact to Ca(2+). R228 is an a carbohydrate binding site.

Belongs to the leguminous lectin family. As to quaternary structure, homodimer and homotetramer. Oligomerization is pH-dependent with homotetramers forming at pH 4 and above.

In terms of biological role, D-mannose/D-glucose-binding lectin. Has anti-inflammatory activity in animal models when applied intravenously. Has antinociceptive activity in mice when applied intravenously. In Canavalia boliviana, this protein is Lectin alpha chain.